Consider the following 470-residue polypeptide: Glutamate--tRNA ligase 2 (470 aa).

The 'HIGH' region signature appears at 11-21 (PSPTGHLHLGG). The 'KMSKS' region motif lies at 238–242 (KLSKR). An ATP-binding site is contributed by Lys-241.

It belongs to the class-I aminoacyl-tRNA synthetase family. Glutamate--tRNA ligase type 1 subfamily. In terms of assembly, monomer.

It is found in the cytoplasm. It catalyses the reaction tRNA(Glu) + L-glutamate + ATP = L-glutamyl-tRNA(Glu) + AMP + diphosphate. Functionally, catalyzes the attachment of glutamate to tRNA(Glu) in a two-step reaction: glutamate is first activated by ATP to form Glu-AMP and then transferred to the acceptor end of tRNA(Glu). This chain is Glutamate--tRNA ligase 2, found in Ehrlichia ruminantium (strain Welgevonden).